A 502-amino-acid chain; its full sequence is Glycerol kinase (502 aa).

T14 is a binding site for ADP. ATP contacts are provided by T14, T15, and S16. T14 serves as a coordination point for sn-glycerol 3-phosphate. An ADP-binding site is contributed by R18. Residues R84, E85, Y136, and D246 each coordinate sn-glycerol 3-phosphate. Residues R84, E85, Y136, D246, and Q247 each coordinate glycerol. Positions 268 and 311 each coordinate ADP. Residues T268, G311, Q315, and G412 each contribute to the ATP site. Residues G412 and N416 each coordinate ADP.

The protein belongs to the FGGY kinase family. As to quaternary structure, homotetramer and homodimer (in equilibrium). Heterodimer with EIIA-Glc. Binds 1 zinc ion per glycerol kinase EIIA-Glc dimer. The zinc ion is important for dimerization.

The catalysed reaction is glycerol + ATP = sn-glycerol 3-phosphate + ADP + H(+). Its pathway is polyol metabolism; glycerol degradation via glycerol kinase pathway; sn-glycerol 3-phosphate from glycerol: step 1/1. Activity of this regulatory enzyme is affected by several metabolites. Allosterically and non-competitively inhibited by fructose 1,6-bisphosphate (FBP) and unphosphorylated phosphocarrier protein EIIA-Glc (III-Glc), an integral component of the bacterial phosphotransferase (PTS) system. In terms of biological role, key enzyme in the regulation of glycerol uptake and metabolism. Catalyzes the phosphorylation of glycerol to yield sn-glycerol 3-phosphate. The protein is Glycerol kinase of Shigella boydii serotype 18 (strain CDC 3083-94 / BS512).